A 641-amino-acid chain; its full sequence is Isomalto-dextranase (641 aa).

The segment at residues 1-39 (MMNLSRRTLLTTGSAATLAYALGMAGSAQAATAVTARPG) is a signal peptide (tat-type signal). D227 acts as the Nucleophile in catalysis. Residue D288 is the Proton donor of the active site. Residues 500 to 640 (TRYPAAFAAW…AINLNWIELD (141 aa)) enclose the CBM6 domain. The interval 556–588 (SGYRYANATDDNTTSKTTTKKANPEKADRSTVD) is disordered. A compositionally biased stretch (low complexity) spans 561-576 (ANATDDNTTSKTTTKK). Basic and acidic residues predominate over residues 577–586 (ANPEKADRST).

The protein belongs to the glycosyl hydrolase 27 family. Predicted to be exported by the Tat system. The position of the signal peptide cleavage has been experimentally proven.

Its subcellular location is the secreted. It carries out the reaction Hydrolysis of (1-&gt;6)-alpha-D-glucosidic linkages in polysaccharides, to remove successive isomaltose units from the non-reducing ends of the chains.. This chain is Isomalto-dextranase (imd), found in Arthrobacter globiformis.